We begin with the raw amino-acid sequence, 341 residues long: Putative methyltransferase YGR283C (341 aa).

It belongs to the class IV-like SAM-binding methyltransferase superfamily.

It localises to the nucleus. The protein localises to the nucleolus. This chain is Putative methyltransferase YGR283C, found in Saccharomyces cerevisiae (strain ATCC 204508 / S288c) (Baker's yeast).